Here is a 171-residue protein sequence, read N- to C-terminus: uncharacterized protein (171 aa).

The protein to M.jannaschii MJ0417.

This is an uncharacterized protein from Methanocaldococcus jannaschii (strain ATCC 43067 / DSM 2661 / JAL-1 / JCM 10045 / NBRC 100440) (Methanococcus jannaschii).